A 391-amino-acid polypeptide reads, in one-letter code: Enoyl-CoA delta isomerase 2 (391 aa).

A mitochondrion-targeting transit peptide spans 1-36; that stretch reads MAAVTWSRARCWCPSLLQVLRLPVTKLHLGRPAMRA. Residues 37-122 enclose the ACB domain; the sequence is TQQDFENAMN…VSSLSSSSEA (86 aa). An N6-acetyllysine; alternate modification is found at lysine 49. Residue lysine 49 is modified to N6-succinyllysine; alternate. Position 53 is an N6-succinyllysine (lysine 53). The residue at position 60 (lysine 60) is an N6-acetyllysine; alternate. The residue at position 60 (lysine 60) is an N6-succinyllysine; alternate. 64-68 provides a ligand contact to an acyl-CoA; the sequence is YALYK. Residues lysine 68, lysine 79, and lysine 88 each carry the N6-succinyllysine modification. The residue at position 90 (lysine 90) is an N6-acetyllysine; alternate. N6-succinyllysine; alternate is present on lysine 90. Lysine 90 contacts an acyl-CoA. At serine 99 the chain carries Phosphoserine. Residue tyrosine 109 participates in an acyl-CoA binding. Phosphoserine is present on serine 117. N6-succinyllysine is present on residues lysine 127 and lysine 159. The segment at 149 to 319 is ECH-like; that stretch reads TKITFNRPSK…AQGLVTEVFP (171 aa). 196 to 200 lines the substrate pocket; that stretch reads SGNDL. N6-succinyllysine is present on lysine 286. A Microbody targeting signal motif is present at residues 389–391; the sequence is PKL.

In the C-terminal section; belongs to the enoyl-CoA hydratase/isomerase family. Liver (at protein level).

The protein localises to the peroxisome matrix. The protein resides in the mitochondrion. The enzyme catalyses a (3Z)-enoyl-CoA = a 4-saturated (2E)-enoyl-CoA. It catalyses the reaction a (3E)-enoyl-CoA = a 4-saturated (2E)-enoyl-CoA. It carries out the reaction (2E)-tetradecenoyl-CoA = (3Z)-tetradecenoyl-CoA. The catalysed reaction is (3E)-tetradecenoyl-CoA = (2E)-tetradecenoyl-CoA. The enzyme catalyses (3E)-octenoyl-CoA = (2E)-octenoyl-CoA. It catalyses the reaction (3Z)-octenoyl-CoA = (2E)-octenoyl-CoA. It carries out the reaction (3E)-nonenoyl-CoA = (2E)-nonenoyl-CoA. It functions in the pathway lipid metabolism; fatty acid beta-oxidation. Functionally, able to isomerize both 3-cis and 3-trans double bonds into the 2-trans form in a range of enoyl-CoA species. Has a preference for 3-trans substrates. The sequence is that of Enoyl-CoA delta isomerase 2 from Rattus norvegicus (Rat).